Reading from the N-terminus, the 461-residue chain is Bifunctional protein GlmU (461 aa).

Positions methionine 1–arginine 232 are pyrophosphorylase. Residues leucine 8–glycine 11, lysine 22, glutamine 73, and glycine 78–threonine 79 each bind UDP-N-acetyl-alpha-D-glucosamine. Position 102 (aspartate 102) interacts with Mg(2+). The UDP-N-acetyl-alpha-D-glucosamine site is built by glycine 142, glutamate 157, and asparagine 230. Residue asparagine 230 participates in Mg(2+) binding. Residues glutamine 233–lysine 253 are linker. Residues glycine 254–aspartate 461 are N-acetyltransferase. UDP-N-acetyl-alpha-D-glucosamine contacts are provided by arginine 336 and lysine 354. The active-site Proton acceptor is the histidine 366. 2 residues coordinate UDP-N-acetyl-alpha-D-glucosamine: tyrosine 369 and asparagine 380. Residues alanine 383, asparagine 389 to tyrosine 390, serine 408, and alanine 426 each bind acetyl-CoA.

This sequence in the N-terminal section; belongs to the N-acetylglucosamine-1-phosphate uridyltransferase family. In the C-terminal section; belongs to the transferase hexapeptide repeat family. In terms of assembly, homotrimer. Requires Mg(2+) as cofactor.

It is found in the cytoplasm. It catalyses the reaction alpha-D-glucosamine 1-phosphate + acetyl-CoA = N-acetyl-alpha-D-glucosamine 1-phosphate + CoA + H(+). It carries out the reaction N-acetyl-alpha-D-glucosamine 1-phosphate + UTP + H(+) = UDP-N-acetyl-alpha-D-glucosamine + diphosphate. The protein operates within nucleotide-sugar biosynthesis; UDP-N-acetyl-alpha-D-glucosamine biosynthesis; N-acetyl-alpha-D-glucosamine 1-phosphate from alpha-D-glucosamine 6-phosphate (route II): step 2/2. It functions in the pathway nucleotide-sugar biosynthesis; UDP-N-acetyl-alpha-D-glucosamine biosynthesis; UDP-N-acetyl-alpha-D-glucosamine from N-acetyl-alpha-D-glucosamine 1-phosphate: step 1/1. It participates in bacterial outer membrane biogenesis; LPS lipid A biosynthesis. In terms of biological role, catalyzes the last two sequential reactions in the de novo biosynthetic pathway for UDP-N-acetylglucosamine (UDP-GlcNAc). The C-terminal domain catalyzes the transfer of acetyl group from acetyl coenzyme A to glucosamine-1-phosphate (GlcN-1-P) to produce N-acetylglucosamine-1-phosphate (GlcNAc-1-P), which is converted into UDP-GlcNAc by the transfer of uridine 5-monophosphate (from uridine 5-triphosphate), a reaction catalyzed by the N-terminal domain. This is Bifunctional protein GlmU from Legionella pneumophila (strain Lens).